A 1027-amino-acid polypeptide reads, in one-letter code: Contactin-5 (1027 aa).

Positions 1 to 19 (MMWLSWKLFLFLSLIGCLS) are cleaved as a signal peptide. Ig-like C2-type domains are found at residues 32–117 (PDDV…AVLQ), 123–209 (NFSG…RVLS), 227–307 (PKIE…RNVF), 317–401 (PQWV…AELK), 407–494 (PTFP…ASVS), and 498–593 (PTRI…TELL). Residues cysteine 50 and cysteine 100 are joined by a disulfide bond. N-linked (GlcNAc...) asparagine glycans are attached at residues asparagine 65 and asparagine 123. 2 disulfides stabilise this stretch: cysteine 144/cysteine 196 and cysteine 249/cysteine 296. 3 N-linked (GlcNAc...) asparagine glycosylation sites follow: asparagine 324, asparagine 376, and asparagine 467. Disulfide bonds link cysteine 338/cysteine 385, cysteine 430/cysteine 478, and cysteine 520/cysteine 577. Fibronectin type-III domains lie at 600-698 (PPGV…TNEA), 703-800 (PPAN…SAEG), 805-899 (APID…TKKS), and 901-994 (PSQA…SYAG). 4 N-linked (GlcNAc...) asparagine glycosylation sites follow: asparagine 706, asparagine 743, asparagine 858, and asparagine 929. Residue serine 999 is the site of GPI-anchor amidated serine attachment. Residues 1000 to 1027 (AQSTLHMFSTSSSSVTLLLVLMVPSTSW) constitute a propeptide, removed in mature form.

The protein belongs to the immunoglobulin superfamily. Contactin family. In terms of assembly, interacts with INgCAM/L1 and the tenascin-R TNP protein. Does not interacts with NrCAM. In terms of tissue distribution, expressed by subpopulations of Purkinje cells in the cerebellum. Also expressed by one type of Purkinje cell afferents, the climbing fibers.

It localises to the cell membrane. Functionally, contactins mediate cell surface interactions during nervous system development. May contribute to the formation of somatotopic maps of cerebellar afferents during the development of the nervous system. This is Contactin-5 (CNTN5) from Gallus gallus (Chicken).